Consider the following 261-residue polypeptide: Ribonuclease HII (261 aa).

Positions 71–259 constitute an RNase H type-2 domain; it reads KYIAGVDEVG…VKESKLHFDS (189 aa). A divalent metal cation contacts are provided by aspartate 77, glutamate 78, and aspartate 169.

This sequence belongs to the RNase HII family. Mn(2+) serves as cofactor. Requires Mg(2+) as cofactor.

It is found in the cytoplasm. It carries out the reaction Endonucleolytic cleavage to 5'-phosphomonoester.. Endonuclease that specifically degrades the RNA of RNA-DNA hybrids. In Listeria monocytogenes serovar 1/2a (strain ATCC BAA-679 / EGD-e), this protein is Ribonuclease HII.